Consider the following 330-residue polypeptide: Uracil-DNA glycosylase, mitochondrial (330 aa).

The N-terminal 49 residues, 1–49 (MASSTPKTLMDFFQPAKRLKASPSSSSFPAVSVAGGSRDLGSVANSPPR), are a transit peptide targeting the mitochondrion. Catalysis depends on aspartate 173, which acts as the Proton acceptor.

It belongs to the uracil-DNA glycosylase (UDG) superfamily. UNG family.

It localises to the mitochondrion. It carries out the reaction Hydrolyzes single-stranded DNA or mismatched double-stranded DNA and polynucleotides, releasing free uracil.. Inhidited by the small peptide uracil-DNA-glycosylase inhibitor (Ugi). Excises uracil residues from the DNA which can arise as a result of misincorporation of dUMP residues by DNA polymerase or due to deamination of cytosine. More active on U:G, U:T and U:C mispairs than on U:A pairs. Highly specific for uracil and no activity with 5-substituted uracil or cytosine derivatives. Required for initiation of base excision repair (BER) of uracil. This chain is Uracil-DNA glycosylase, mitochondrial, found in Arabidopsis thaliana (Mouse-ear cress).